A 93-amino-acid polypeptide reads, in one-letter code: Large ribosomal subunit protein uL23c (93 aa).

The protein belongs to the universal ribosomal protein uL23 family. Part of the 50S ribosomal subunit.

The protein resides in the plastid. Its subcellular location is the chloroplast. In terms of biological role, binds to 23S rRNA. This is Large ribosomal subunit protein uL23c (rpl23) from Adiantum capillus-veneris (Maidenhair fern).